A 206-amino-acid polypeptide reads, in one-letter code: Thymidylate kinase (206 aa).

G10–S17 provides a ligand contact to ATP.

The protein belongs to the thymidylate kinase family.

It catalyses the reaction dTMP + ATP = dTDP + ADP. Functionally, phosphorylation of dTMP to form dTDP in both de novo and salvage pathways of dTTP synthesis. The sequence is that of Thymidylate kinase from Caldicellulosiruptor saccharolyticus (strain ATCC 43494 / DSM 8903 / Tp8T 6331).